Here is a 244-residue protein sequence, read N- to C-terminus: Transmembrane protein 176A (244 aa).

Position 42 is a phosphoserine (serine 42). The next 4 membrane-spanning stretches (helical) occupy residues 60 to 80, 92 to 112, 122 to 142, and 204 to 224; these read VLVA…VLGG, SEGA…VAFL, ALMR…AIVI, and LLGI…VYIW.

The protein belongs to the TMEM176 family. As to quaternary structure, interacts with MCOLN2. As to expression, specifically expressed in lung, kidney and spleen.

It localises to the membrane. In Mus musculus (Mouse), this protein is Transmembrane protein 176A (Tmem176a).